The primary structure comprises 195 residues: UPF0215 protein TSIB_1161 (195 aa).

The protein belongs to the UPF0215 family.

The polypeptide is UPF0215 protein TSIB_1161 (Thermococcus sibiricus (strain DSM 12597 / MM 739)).